The primary structure comprises 387 residues: Alkanesulfonate monooxygenase (387 aa).

Belongs to the SsuD family.

It carries out the reaction an alkanesulfonate + FMNH2 + O2 = an aldehyde + FMN + sulfite + H2O + 2 H(+). Its function is as follows. Catalyzes the desulfonation of aliphatic sulfonates. This chain is Alkanesulfonate monooxygenase, found in Ralstonia pickettii (strain 12J).